The sequence spans 416 residues: 26S proteasome regulatory subunit 8 (416 aa).

Residues 1–18 (MAPPASTASSADPSKPTA) show a composition bias toward low complexity. Positions 1–29 (MAPPASTASSADPSKPTAQKLTEESDEKT) are disordered. 200-207 (GPPGTGKT) contacts ATP.

It belongs to the AAA ATPase family. In terms of assembly, component of the 19S proteasome regulatory particle complex. The 26S proteasome consists of a 20S core particle (CP) and two 19S regulatory subunits (RP). Interacts with elt-2.

It localises to the cytoplasm. Its subcellular location is the nucleus. Functionally, component of the 26S proteasome, a multiprotein complex involved in the ATP-dependent degradation of ubiquitinated proteins. This complex plays a key role in the maintenance of protein homeostasis by removing misfolded or damaged proteins, which could impair cellular functions, and by removing proteins whose functions are no longer required. Therefore, the proteasome participates in numerous cellular processes, including cell cycle progression, apoptosis, or DNA damage repair. Belongs to the heterohexameric ring of AAA (ATPases associated with diverse cellular activities) proteins that unfolds ubiquitinated target proteins that are concurrently translocated into a proteolytic chamber and degraded into peptides. In addition, regulates gene expression in response to bacterial infection. Binds to the GATA transcription factor elt-2 to control its transcriptional activity and thus the expression of elt-2-dependent genes in response to infection by Gram-negative bacteria such as P.aeruginosa. The protein is 26S proteasome regulatory subunit 8 of Caenorhabditis elegans.